A 655-amino-acid polypeptide reads, in one-letter code: DNA mismatch repair protein MutL (655 aa).

Disordered regions lie at residues 357–416 (EKKQ…DDYT) and 439–460 (DFDS…SKDP). Residues 371–383 (SHEEDEKNDDKAY) show a composition bias toward basic and acidic residues. The segment covering 402 to 416 (NTSVSTSPNSDDDYT) has biased composition (polar residues).

Belongs to the DNA mismatch repair MutL/HexB family.

In terms of biological role, this protein is involved in the repair of mismatches in DNA. It is required for dam-dependent methyl-directed DNA mismatch repair. May act as a 'molecular matchmaker', a protein that promotes the formation of a stable complex between two or more DNA-binding proteins in an ATP-dependent manner without itself being part of a final effector complex. This chain is DNA mismatch repair protein MutL, found in Staphylococcus saprophyticus subsp. saprophyticus (strain ATCC 15305 / DSM 20229 / NCIMB 8711 / NCTC 7292 / S-41).